The primary structure comprises 369 residues: Galactose-1-phosphate uridylyltransferase (369 aa).

Residues Cys54 and Cys57 each contribute to the Zn(2+) site. UDP-alpha-D-glucose-binding positions include Ala63 and 79–80 (ND). His127 is a binding site for Zn(2+). Asn172 provides a ligand contact to UDP-alpha-D-glucose. His183 lines the Zn(2+) pocket. The active-site Tele-UMP-histidine intermediate is His185. Gln187 lines the UDP-alpha-D-glucose pocket. The Fe cation site is built by Glu201, His300, His317, and His319. Residues 332–335 (KFCV) and 337–338 (FE) contribute to the UDP-alpha-D-glucose site.

The protein belongs to the galactose-1-phosphate uridylyltransferase type 1 family. As to quaternary structure, homodimer. Zn(2+) serves as cofactor.

The catalysed reaction is alpha-D-galactose 1-phosphate + UDP-alpha-D-glucose = alpha-D-glucose 1-phosphate + UDP-alpha-D-galactose. It functions in the pathway carbohydrate metabolism; galactose metabolism. This is Galactose-1-phosphate uridylyltransferase (gal7) from Schizosaccharomyces pombe (strain 972 / ATCC 24843) (Fission yeast).